The following is a 350-amino-acid chain: tRNA U34 carboxymethyltransferase (350 aa).

Residues K101, W125, K130, G150, 172 to 174 (DPS), 208 to 209 (LE), M224, Y228, and R343 contribute to the carboxy-S-adenosyl-L-methionine site.

The protein belongs to the class I-like SAM-binding methyltransferase superfamily. CmoB family. Homotetramer.

The catalysed reaction is carboxy-S-adenosyl-L-methionine + 5-hydroxyuridine(34) in tRNA = 5-carboxymethoxyuridine(34) in tRNA + S-adenosyl-L-homocysteine + H(+). In terms of biological role, catalyzes carboxymethyl transfer from carboxy-S-adenosyl-L-methionine (Cx-SAM) to 5-hydroxyuridine (ho5U) to form 5-carboxymethoxyuridine (cmo5U) at position 34 in tRNAs. This chain is tRNA U34 carboxymethyltransferase, found in Psychrobacter arcticus (strain DSM 17307 / VKM B-2377 / 273-4).